Consider the following 487-residue polypeptide: Protein SMG9 (487 aa).

Disordered stretches follow at residues 30-83 (EDAA…PPAL) and 136-164 (RDKGSCSGGAGTAGTSAGAPNALQELQPP). A compositionally biased stretch (basic and acidic residues) spans 42–70 (LKKDRDREQETWDRERDKDRKLERDREAE).

It belongs to the SMG9 family.

Functionally, involved in nonsense-mediated decay (NMD) of mRNAs containing premature stop codons. Probable component of kinase complex containing nonC and recruited to stalled ribosomes. This is Protein SMG9 from Drosophila melanogaster (Fruit fly).